The following is a 106-amino-acid chain: Replication restart protein PriB (106 aa).

Positions 4–103 (TNRLVLSGTV…LHAEQIEFID (100 aa)) constitute an SSB domain.

Belongs to the PriB family. In terms of assembly, homodimer. Interacts with PriA and DnaT. Component of the replication restart primosome. Primosome assembly occurs via a 'hand-off' mechanism. PriA binds to replication forks, subsequently PriB then DnaT bind; DnaT then displaces ssDNA to generate the helicase loading substrate.

Its function is as follows. Involved in the restart of stalled replication forks, which reloads the replicative helicase on sites other than the origin of replication; the PriA-PriB pathway is the major replication restart pathway. During primosome assembly it facilitates complex formation between PriA and DnaT on DNA; stabilizes PriA on DNA. Stimulates the DNA unwinding activity of PriA helicase. In Yersinia enterocolitica serotype O:8 / biotype 1B (strain NCTC 13174 / 8081), this protein is Replication restart protein PriB.